A 446-amino-acid chain; its full sequence is NADH-ubiquinone oxidoreductase chain 4 (446 aa).

The next 13 helical transmembrane spans lie at isoleucine 4–valine 24, methionine 56–serine 76, isoleucine 93–tyrosine 113, leucine 114–proline 134, valine 141–valine 161, leucine 182–leucine 202, proline 212–leucine 232, tyrosine 245–leucine 265, alanine 272–methionine 292, leucine 297–leucine 317, methionine 330–leucine 350, isoleucine 373–alanine 393, and leucine 426–leucine 446.

The protein belongs to the complex I subunit 4 family.

The protein resides in the mitochondrion membrane. It catalyses the reaction a ubiquinone + NADH + 5 H(+)(in) = a ubiquinol + NAD(+) + 4 H(+)(out). Core subunit of the mitochondrial membrane respiratory chain NADH dehydrogenase (Complex I) that is believed to belong to the minimal assembly required for catalysis. Complex I functions in the transfer of electrons from NADH to the respiratory chain. The immediate electron acceptor for the enzyme is believed to be ubiquinone. This Drosophila yakuba (Fruit fly) protein is NADH-ubiquinone oxidoreductase chain 4 (mt:ND4).